The sequence spans 183 residues: uncharacterized protein (183 aa).

4 consecutive transmembrane segments (helical) span residues 26-48 (FVAI…IIFY), 72-91 (LLVR…KVFI), 104-121 (IIEA…LIVF), and 125-147 (FTFW…YVLL).

The protein resides in the cell membrane. This is an uncharacterized protein from Aquifex aeolicus (strain VF5).